A 380-amino-acid chain; its full sequence is MQDILLIKYGELALKGDNRSFFENKLIKNIKHALSDFKEVKVEKTHGRIYVECDGDIEEVIERLKKVFGIVGITKAKKTDLNLDEIFKAAVELMKGHEGKTFKVETKRPNKSFPYNSMEVSRRVGAAVLKNIKNLKVDVHNPDVLLNVEIREMAFVYAGVIEGIGGLPLGTNGKATVLLSGGIDSPVAAWMMMKRGVEVEAVYFHSPPYTSERAKDKVVDLCKVLSQYGQRIKLHVVHFTDLQLEIYEKCPPKFTTIIMRRMMMKIAEKIAQKNGSMALITGESLGQVASQTIESLYVTNASVSMPIFRPLIGMDKTEIIDLAQKISTFEISIRPYEDCCTIFVPKHPATKPKLDKVIEAEEKMEYQKYIDDFEEEVIEV.

Residues 58-162 (EEVIERLKKV…MAFVYAGVIE (105 aa)) form the THUMP domain. Residues 178 to 179 (LL), 203 to 204 (YF), R260, G282, and Q291 each bind ATP.

Belongs to the ThiI family.

The protein localises to the cytoplasm. It carries out the reaction [ThiI sulfur-carrier protein]-S-sulfanyl-L-cysteine + a uridine in tRNA + 2 reduced [2Fe-2S]-[ferredoxin] + ATP + H(+) = [ThiI sulfur-carrier protein]-L-cysteine + a 4-thiouridine in tRNA + 2 oxidized [2Fe-2S]-[ferredoxin] + AMP + diphosphate. It catalyses the reaction [ThiS sulfur-carrier protein]-C-terminal Gly-Gly-AMP + S-sulfanyl-L-cysteinyl-[cysteine desulfurase] + AH2 = [ThiS sulfur-carrier protein]-C-terminal-Gly-aminoethanethioate + L-cysteinyl-[cysteine desulfurase] + A + AMP + 2 H(+). Its pathway is cofactor biosynthesis; thiamine diphosphate biosynthesis. Its function is as follows. Catalyzes the ATP-dependent transfer of a sulfur to tRNA to produce 4-thiouridine in position 8 of tRNAs, which functions as a near-UV photosensor. Also catalyzes the transfer of sulfur to the sulfur carrier protein ThiS, forming ThiS-thiocarboxylate. This is a step in the synthesis of thiazole, in the thiamine biosynthesis pathway. The sulfur is donated as persulfide by IscS. The chain is Probable tRNA sulfurtransferase from Thermoanaerobacter pseudethanolicus (strain ATCC 33223 / 39E) (Clostridium thermohydrosulfuricum).